The sequence spans 606 residues: Probable potassium transport system protein Kup 2 (606 aa).

Helical transmembrane passes span 18 to 38 (GLVF…IMTL), 46 to 66 (VLGI…VEYA), 97 to 117 (VAFV…DGII), 140 to 160 (AQGV…IFQF), 169 to 189 (AFGP…IVSI), 204 to 224 (AVTF…EVIL), 247 to 267 (AWYF…AFIL), 286 to 306 (ILYI…SQAL), 339 to 359 (IYIG…MLIF), 368 to 388 (AYGL…TMIF), 395 to 415 (WKVP…TANF), and 418 to 438 (LPHG…IMII).

It belongs to the HAK/KUP transporter (TC 2.A.72) family.

The protein localises to the cell inner membrane. The enzyme catalyses K(+)(in) + H(+)(in) = K(+)(out) + H(+)(out). In terms of biological role, transport of potassium into the cell. Likely operates as a K(+):H(+) symporter. This Geobacter metallireducens (strain ATCC 53774 / DSM 7210 / GS-15) protein is Probable potassium transport system protein Kup 2.